Here is a 201-residue protein sequence, read N- to C-terminus: Protein GrpE (201 aa).

The segment covering 1 to 11 has biased composition (polar residues); the sequence is MTDSTNNQGTS. A disordered region spans residues 1–40; it reads MTDSTNNQGTSGRPDDDHTTEEVASVFNDPGAQAPAGEPD.

It belongs to the GrpE family. As to quaternary structure, homodimer.

Its subcellular location is the cytoplasm. In terms of biological role, participates actively in the response to hyperosmotic and heat shock by preventing the aggregation of stress-denatured proteins, in association with DnaK and GrpE. It is the nucleotide exchange factor for DnaK and may function as a thermosensor. Unfolded proteins bind initially to DnaJ; upon interaction with the DnaJ-bound protein, DnaK hydrolyzes its bound ATP, resulting in the formation of a stable complex. GrpE releases ADP from DnaK; ATP binding to DnaK triggers the release of the substrate protein, thus completing the reaction cycle. Several rounds of ATP-dependent interactions between DnaJ, DnaK and GrpE are required for fully efficient folding. The protein is Protein GrpE of Beijerinckia indica subsp. indica (strain ATCC 9039 / DSM 1715 / NCIMB 8712).